We begin with the raw amino-acid sequence, 105 residues long: UPF0166 protein aq_450 (105 aa).

This sequence belongs to the UPF0166 family.

This Aquifex aeolicus (strain VF5) protein is UPF0166 protein aq_450.